The sequence spans 209 residues: Isopentenyl-diphosphate Delta-isomerase (209 aa).

Mn(2+) contacts are provided by H31 and H38. In terms of domain architecture, Nudix hydrolase spans 36-171; it reads PLHLAFSVYI…RLLVSPWCRA (136 aa). C73 is an active-site residue. C73 provides a ligand contact to Mg(2+). H75 contributes to the Mn(2+) binding site. E93 lines the Mg(2+) pocket. Residues E120 and E122 each contribute to the Mn(2+) site. E122 is an active-site residue.

This sequence belongs to the IPP isomerase type 1 family. Requires Mg(2+) as cofactor. The cofactor is Mn(2+).

The protein localises to the cytoplasm. The catalysed reaction is isopentenyl diphosphate = dimethylallyl diphosphate. The protein operates within isoprenoid biosynthesis; dimethylallyl diphosphate biosynthesis; dimethylallyl diphosphate from isopentenyl diphosphate: step 1/1. Functionally, catalyzes the 1,3-allylic rearrangement of the homoallylic substrate isopentenyl (IPP) to its highly electrophilic allylic isomer, dimethylallyl diphosphate (DMAPP). The protein is Isopentenyl-diphosphate Delta-isomerase of Rhizobium rhizogenes (Agrobacterium rhizogenes).